We begin with the raw amino-acid sequence, 360 residues long: Protein Wnt-5b (360 aa).

The signal sequence occupies residues Met-1–Cys-16. The cysteines at positions 84 and 95 are disulfide-linked. Residues Asn-94 and Asn-100 are each glycosylated (N-linked (GlcNAc...) asparagine). Disulfide bonds link Cys-134–Cys-142, Cys-144–Cys-162, Cys-218–Cys-232, Cys-220–Cys-227, Cys-289–Cys-320, Cys-305–Cys-315, Cys-319–Cys-359, Cys-335–Cys-350, Cys-337–Cys-347, and Cys-342–Cys-343. Ser-224 carries O-palmitoleoyl serine; by PORCN lipidation. N-linked (GlcNAc...) asparagine glycans are attached at residues Asn-292 and Asn-306.

The protein belongs to the Wnt family. Palmitoleoylation is required for efficient binding to frizzled receptors. Depalmitoleoylation leads to Wnt signaling pathway inhibition.

The protein resides in the secreted. It localises to the extracellular space. The protein localises to the extracellular matrix. Its function is as follows. Ligand for members of the frizzled family of seven transmembrane receptors. Probable developmental protein. May be a signaling molecule which affects the development of discrete regions of tissues. Is likely to signal over only few cell diameters. The sequence is that of Protein Wnt-5b (wnt5b) from Xenopus laevis (African clawed frog).